The primary structure comprises 172 residues: Small ribosomal subunit protein uS5 (172 aa).

One can recognise an S5 DRBM domain in the interval 17 to 80 (LREKMISVNR…EQARRNMFKV (64 aa)).

The protein belongs to the universal ribosomal protein uS5 family. As to quaternary structure, part of the 30S ribosomal subunit. Contacts proteins S4 and S8.

In terms of biological role, with S4 and S12 plays an important role in translational accuracy. Functionally, located at the back of the 30S subunit body where it stabilizes the conformation of the head with respect to the body. In Burkholderia pseudomallei (strain 1106a), this protein is Small ribosomal subunit protein uS5.